A 273-amino-acid chain; its full sequence is Co-chaperone protein DjlA (273 aa).

Topologically, residues 1 to 6 (MHYWGK) are periplasmic. A helical transmembrane segment spans residues 7 to 31 (LLGLIFGVVSGAGFWGIVIGLFIGH). The Cytoplasmic portion of the chain corresponds to 32–273 (MLDRASVRGN…DLIKKEKGFK (242 aa)). In terms of domain architecture, J spans 207-273 (DACKVLGVRE…DLIKKEKGFK (67 aa)).

Homodimer.

The protein localises to the cell inner membrane. Regulatory DnaK co-chaperone. Direct interaction between DnaK and DjlA is needed for the induction of the wcaABCDE operon, involved in the synthesis of a colanic acid polysaccharide capsule, possibly through activation of the RcsB/RcsC phosphotransfer signaling pathway. The colanic acid capsule may help the bacterium survive conditions outside the host. The protein is Co-chaperone protein DjlA of Photorhabdus laumondii subsp. laumondii (strain DSM 15139 / CIP 105565 / TT01) (Photorhabdus luminescens subsp. laumondii).